We begin with the raw amino-acid sequence, 325 residues long: tRNA N6-adenosine threonylcarbamoyltransferase (325 aa).

Residues histidine 107, histidine 111, and tyrosine 127 each contribute to the Fe cation site. Substrate contacts are provided by residues 127–131 (YVSGG), aspartate 159, glycine 172, glutamate 176, and asparagine 257. Residue aspartate 285 coordinates Fe cation.

It belongs to the KAE1 / TsaD family. Monomer. Component of the KEOPS complex that consists of Kae1, Bud32, Cgi121 and Pcc1; the whole complex dimerizes. Fe(2+) is required as a cofactor.

The protein resides in the cytoplasm. The enzyme catalyses L-threonylcarbamoyladenylate + adenosine(37) in tRNA = N(6)-L-threonylcarbamoyladenosine(37) in tRNA + AMP + H(+). Its function is as follows. Required for the formation of a threonylcarbamoyl group on adenosine at position 37 (t(6)A37) in tRNAs that read codons beginning with adenine. Is a component of the KEOPS complex that is probably involved in the transfer of the threonylcarbamoyl moiety of threonylcarbamoyl-AMP (TC-AMP) to the N6 group of A37. Kae1 likely plays a direct catalytic role in this reaction, but requires other protein(s) of the complex to fulfill this activity. The protein is tRNA N6-adenosine threonylcarbamoyltransferase of Thermococcus gammatolerans (strain DSM 15229 / JCM 11827 / EJ3).